Here is a 244-residue protein sequence, read N- to C-terminus: Ubiquinone/menaquinone biosynthesis C-methyltransferase UbiE (244 aa).

Residues Thr70, Asp91, and 117-118 (DA) contribute to the S-adenosyl-L-methionine site.

This sequence belongs to the class I-like SAM-binding methyltransferase superfamily. MenG/UbiE family.

The catalysed reaction is a 2-demethylmenaquinol + S-adenosyl-L-methionine = a menaquinol + S-adenosyl-L-homocysteine + H(+). It catalyses the reaction a 2-methoxy-6-(all-trans-polyprenyl)benzene-1,4-diol + S-adenosyl-L-methionine = a 5-methoxy-2-methyl-3-(all-trans-polyprenyl)benzene-1,4-diol + S-adenosyl-L-homocysteine + H(+). It functions in the pathway quinol/quinone metabolism; menaquinone biosynthesis; menaquinol from 1,4-dihydroxy-2-naphthoate: step 2/2. The protein operates within cofactor biosynthesis; ubiquinone biosynthesis. Methyltransferase required for the conversion of demethylmenaquinol (DMKH2) to menaquinol (MKH2) and the conversion of 2-polyprenyl-6-methoxy-1,4-benzoquinol (DDMQH2) to 2-polyprenyl-3-methyl-6-methoxy-1,4-benzoquinol (DMQH2). In Chromobacterium violaceum (strain ATCC 12472 / DSM 30191 / JCM 1249 / CCUG 213 / NBRC 12614 / NCIMB 9131 / NCTC 9757 / MK), this protein is Ubiquinone/menaquinone biosynthesis C-methyltransferase UbiE.